A 280-amino-acid chain; its full sequence is UPF0276 protein CC_2906 (280 aa).

The protein belongs to the UPF0276 family.

In Caulobacter vibrioides (strain ATCC 19089 / CIP 103742 / CB 15) (Caulobacter crescentus), this protein is UPF0276 protein CC_2906.